The primary structure comprises 764 residues: 5-methyltetrahydropteroyltriglutamate--homocysteine methyltransferase (764 aa).

Residues 16-19 (RELK) and Lys115 contribute to the 5-methyltetrahydropteroyltri-L-glutamate site. Residues 435 to 437 (IGS) and Glu488 each bind L-homocysteine. Residues 435-437 (IGS) and Glu488 each bind L-methionine. Residues 519 to 520 (RC) and Trp565 each bind 5-methyltetrahydropteroyltri-L-glutamate. Asp603 contributes to the L-homocysteine binding site. Asp603 is a binding site for L-methionine. Residue Glu609 participates in 5-methyltetrahydropteroyltri-L-glutamate binding. Positions 645, 647, and 669 each coordinate Zn(2+). His698 serves as the catalytic Proton donor. Residue Cys730 coordinates Zn(2+).

The protein belongs to the vitamin-B12 independent methionine synthase family. Requires Zn(2+) as cofactor.

It carries out the reaction 5-methyltetrahydropteroyltri-L-glutamate + L-homocysteine = tetrahydropteroyltri-L-glutamate + L-methionine. It functions in the pathway amino-acid biosynthesis; L-methionine biosynthesis via de novo pathway; L-methionine from L-homocysteine (MetE route): step 1/1. In terms of biological role, catalyzes the transfer of a methyl group from 5-methyltetrahydrofolate to homocysteine resulting in methionine formation. This Burkholderia thailandensis (strain ATCC 700388 / DSM 13276 / CCUG 48851 / CIP 106301 / E264) protein is 5-methyltetrahydropteroyltriglutamate--homocysteine methyltransferase.